Reading from the N-terminus, the 344-residue chain is UDP-N-acetylglucosamine--N-acetylmuramyl-(pentapeptide) pyrophosphoryl-undecaprenol N-acetylglucosamine transferase (344 aa).

UDP-N-acetyl-alpha-D-glucosamine contacts are provided by residues 9–11, N118, R157, S188, and Q282; that span reads TGG.

Belongs to the glycosyltransferase 28 family. MurG subfamily.

Its subcellular location is the cell inner membrane. It carries out the reaction di-trans,octa-cis-undecaprenyl diphospho-N-acetyl-alpha-D-muramoyl-L-alanyl-D-glutamyl-meso-2,6-diaminopimeloyl-D-alanyl-D-alanine + UDP-N-acetyl-alpha-D-glucosamine = di-trans,octa-cis-undecaprenyl diphospho-[N-acetyl-alpha-D-glucosaminyl-(1-&gt;4)]-N-acetyl-alpha-D-muramoyl-L-alanyl-D-glutamyl-meso-2,6-diaminopimeloyl-D-alanyl-D-alanine + UDP + H(+). The protein operates within cell wall biogenesis; peptidoglycan biosynthesis. In terms of biological role, cell wall formation. Catalyzes the transfer of a GlcNAc subunit on undecaprenyl-pyrophosphoryl-MurNAc-pentapeptide (lipid intermediate I) to form undecaprenyl-pyrophosphoryl-MurNAc-(pentapeptide)GlcNAc (lipid intermediate II). This Aquifex aeolicus (strain VF5) protein is UDP-N-acetylglucosamine--N-acetylmuramyl-(pentapeptide) pyrophosphoryl-undecaprenol N-acetylglucosamine transferase.